We begin with the raw amino-acid sequence, 117 residues long: Large ribosomal subunit protein bL17 (117 aa).

It belongs to the bacterial ribosomal protein bL17 family. Part of the 50S ribosomal subunit. Contacts protein L32.

The protein is Large ribosomal subunit protein bL17 of Exiguobacterium sp. (strain ATCC BAA-1283 / AT1b).